Reading from the N-terminus, the 105-residue chain is Platelet factor 4 (105 aa).

Residues 1–29 (MSVAAVFRGLRPSPELLLLGLLFLPAVVA) form the signal peptide. Residue T31 is glycosylated (O-linked (GalNAc...) threonine). 2 disulfide bridges follow: C44/C71 and C46/C87. S61 is modified (phosphoserine). Heparin is bound at residue 96–102 (KKVIKKI).

This sequence belongs to the intercrine alpha (chemokine CxC) family. Homotetramer. Interacts with TNFAIP6 (via Link domain). Interacts with CCR1. Interacts with CXCR3. Interacts with THBD; this interaction enhances generation of activated protein C.

The protein localises to the secreted. Its function is as follows. Chemokine released during platelet aggregation that plays a role in different biological processes including hematopoiesis, cell proliferation, differentiation, and activation. Acts via different functional receptors including CCR1, CXCR3A or CXCR3B. Upon interaction with CXCR3A receptor, induces activated T-lymphocytes migration mediated via downstream Ras/extracellular signal-regulated kinase (ERK) signaling. Neutralizes the anticoagulant effect of heparin by binding more strongly to heparin than to the chondroitin-4-sulfate chains of the carrier molecule. Plays a role in the inhibition of hematopoiesis and in the maintenance of hematopoietic stem cell (HSC) quiescence. Chemotactic for neutrophils and monocytes via CCR1. Inhibits endothelial cell proliferation. In cooperation with toll-like receptor 8/TLR8, induces chromatin remodeling and activates inflammatory gene expression via the TBK1-IRF5 axis. In addition, induces myofibroblast differentiation and collagen synthesis in different precursor cells, including endothelial cells, by stimulating endothelial-to-mesenchymal transition. Interacts with thrombomodulin/THBD to enhance the activation of protein C and thus potentiates its anticoagulant activity. The sequence is that of Platelet factor 4 (Pf4) from Mus musculus (Mouse).